A 572-amino-acid chain; its full sequence is 2-isopropylmalate synthase (572 aa).

In terms of domain architecture, Pyruvate carboxyltransferase spans Pro31–Asn305. Residues Asp40, His244, His246, and Asn280 each contribute to the Mg(2+) site. The tract at residues Asn437–Val572 is regulatory domain.

It belongs to the alpha-IPM synthase/homocitrate synthase family. LeuA type 2 subfamily. As to quaternary structure, homodimer. Mg(2+) is required as a cofactor.

It is found in the cytoplasm. The catalysed reaction is 3-methyl-2-oxobutanoate + acetyl-CoA + H2O = (2S)-2-isopropylmalate + CoA + H(+). It participates in amino-acid biosynthesis; L-leucine biosynthesis; L-leucine from 3-methyl-2-oxobutanoate: step 1/4. Functionally, catalyzes the condensation of the acetyl group of acetyl-CoA with 3-methyl-2-oxobutanoate (2-ketoisovalerate) to form 3-carboxy-3-hydroxy-4-methylpentanoate (2-isopropylmalate). The polypeptide is 2-isopropylmalate synthase (Paraburkholderia xenovorans (strain LB400)).